The chain runs to 306 residues: Small ribosomal subunit protein uS2 (306 aa).

A disordered region spans residues 257 to 306 (EGDKKDETAAAAEVQTSAETEKVADAEKPAEAVAEAEAEAPAADADAEQA). A compositionally biased stretch (basic and acidic residues) spans 275–286 (ETEKVADAEKPA). Positions 287-300 (EAVAEAEAEAPAAD) are enriched in low complexity.

Belongs to the universal ribosomal protein uS2 family.

This is Small ribosomal subunit protein uS2 from Streptomyces griseus subsp. griseus (strain JCM 4626 / CBS 651.72 / NBRC 13350 / KCC S-0626 / ISP 5235).